The sequence spans 284 residues: ATP phosphoribosyltransferase (284 aa).

It belongs to the ATP phosphoribosyltransferase family. Long subfamily. Mg(2+) is required as a cofactor.

Its subcellular location is the cytoplasm. The enzyme catalyses 1-(5-phospho-beta-D-ribosyl)-ATP + diphosphate = 5-phospho-alpha-D-ribose 1-diphosphate + ATP. It functions in the pathway amino-acid biosynthesis; L-histidine biosynthesis; L-histidine from 5-phospho-alpha-D-ribose 1-diphosphate: step 1/9. With respect to regulation, feedback inhibited by histidine. Its function is as follows. Catalyzes the condensation of ATP and 5-phosphoribose 1-diphosphate to form N'-(5'-phosphoribosyl)-ATP (PR-ATP). Has a crucial role in the pathway because the rate of histidine biosynthesis seems to be controlled primarily by regulation of HisG enzymatic activity. In Corynebacterium kroppenstedtii (strain DSM 44385 / JCM 11950 / CIP 105744 / CCUG 35717), this protein is ATP phosphoribosyltransferase.